A 584-amino-acid chain; its full sequence is 65 kDa protein (584 aa).

One can recognise a Toprim domain in the interval 459–548 (YDLYIAESAI…TKKVENWLPP (90 aa)).

The chain is 65 kDa protein from Zymomonas mobilis subsp. mobilis (strain ATCC 10988 / DSM 424 / LMG 404 / NCIMB 8938 / NRRL B-806 / ZM1).